The primary structure comprises 140 residues: Large ribosomal subunit protein uL11 (140 aa).

It belongs to the universal ribosomal protein uL11 family. As to quaternary structure, part of the ribosomal stalk of the 50S ribosomal subunit. Interacts with L10 and the large rRNA to form the base of the stalk. L10 forms an elongated spine to which L12 dimers bind in a sequential fashion forming a multimeric L10(L12)X complex. Post-translationally, one or more lysine residues are methylated.

In terms of biological role, forms part of the ribosomal stalk which helps the ribosome interact with GTP-bound translation factors. The sequence is that of Large ribosomal subunit protein uL11 from Dehalococcoides mccartyi (strain ATCC BAA-2100 / JCM 16839 / KCTC 5957 / BAV1).